A 184-amino-acid polypeptide reads, in one-letter code: Photosystem I assembly protein Ycf4 (184 aa).

A run of 2 helical transmembrane segments spans residues 25 to 45 (ACIL…SYLG) and 57 to 77 (ILFV…LFIS).

Belongs to the Ycf4 family.

The protein resides in the plastid. The protein localises to the chloroplast thylakoid membrane. Its function is as follows. Seems to be required for the assembly of the photosystem I complex. The polypeptide is Photosystem I assembly protein Ycf4 (Cycas taitungensis (Prince sago)).